The following is a 42-amino-acid chain: uncharacterized protein (42 aa).

This is an uncharacterized protein from Dictyostelium discoideum (Social amoeba).